The chain runs to 221 residues: 7-cyano-7-deazaguanine synthase (221 aa).

Residue 10–20 (LSGGLDSTTCM) coordinates ATP. Residues cysteine 188, cysteine 196, cysteine 199, and cysteine 202 each contribute to the Zn(2+) site.

The protein belongs to the QueC family. In terms of assembly, homodimer. The cofactor is Zn(2+).

It carries out the reaction 7-carboxy-7-deazaguanine + NH4(+) + ATP = 7-cyano-7-deazaguanine + ADP + phosphate + H2O + H(+). Its pathway is purine metabolism; 7-cyano-7-deazaguanine biosynthesis. Functionally, catalyzes the ATP-dependent conversion of 7-carboxy-7-deazaguanine (CDG) to 7-cyano-7-deazaguanine (preQ(0)). This chain is 7-cyano-7-deazaguanine synthase, found in Oceanobacillus iheyensis (strain DSM 14371 / CIP 107618 / JCM 11309 / KCTC 3954 / HTE831).